Reading from the N-terminus, the 205-residue chain is Suppressor of silencing 2b (205 aa).

A disordered region spans residues 23–52; that stretch reads SEPQPSTTESRPSMPPINSGKPSVTEKPGV.

This sequence belongs to the cucumovirus/ilarvirus protein 2b family.

The protein localises to the host nucleus. Its function is as follows. Acts as a suppressor of RNA-mediated gene silencing, also known as post-transcriptional gene silencing (PTGS), a mechanism of plant viral defense that limits the accumulation of viral RNAs. May directly interfere with the mobile silencing signal. This Tobacco streak virus (strain WC) (TSV) protein is Suppressor of silencing 2b.